The sequence spans 210 residues: Outer-membrane lipoprotein LolB (210 aa).

The signal sequence occupies residues 1–26 (MSKLKIDTKRRFSLLIALVLIISLSS). Cys27 is lipidated: N-palmitoyl cysteine. Cys27 is lipidated: S-diacylglycerol cysteine.

Belongs to the LolB family. In terms of assembly, monomer.

The protein resides in the cell outer membrane. Plays a critical role in the incorporation of lipoproteins in the outer membrane after they are released by the LolA protein. This is Outer-membrane lipoprotein LolB from Francisella tularensis subsp. novicida (strain U112).